A 98-amino-acid polypeptide reads, in one-letter code: Small ribosomal subunit protein uS19 (98 aa).

This sequence belongs to the universal ribosomal protein uS19 family.

Its function is as follows. Protein S19 forms a complex with S13 that binds strongly to the 16S ribosomal RNA. The chain is Small ribosomal subunit protein uS19 from Chlorobaculum parvum (strain DSM 263 / NCIMB 8327) (Chlorobium vibrioforme subsp. thiosulfatophilum).